Consider the following 268-residue polypeptide: 4-diphosphocytidyl-2-C-methyl-D-erythritol kinase (268 aa).

Residue Lys10 is part of the active site. 101 to 111 (PTQAGLGGGST) is a binding site for ATP. The active site involves Asp143.

The protein belongs to the GHMP kinase family. IspE subfamily.

The enzyme catalyses 4-CDP-2-C-methyl-D-erythritol + ATP = 4-CDP-2-C-methyl-D-erythritol 2-phosphate + ADP + H(+). It functions in the pathway isoprenoid biosynthesis; isopentenyl diphosphate biosynthesis via DXP pathway; isopentenyl diphosphate from 1-deoxy-D-xylulose 5-phosphate: step 3/6. Functionally, catalyzes the phosphorylation of the position 2 hydroxy group of 4-diphosphocytidyl-2C-methyl-D-erythritol. In Helicobacter acinonychis (strain Sheeba), this protein is 4-diphosphocytidyl-2-C-methyl-D-erythritol kinase.